The sequence spans 593 residues: Numb-related protein 1 (593 aa).

4 disordered regions span residues 1–97 (MSAS…WQPD), 235–278 (TAQV…NSRS), 331–375 (LRQG…FGTQ), and 493–581 (MSMS…DPFD). Ser17 carries the post-translational modification Phosphoserine; by PKC. Residues 27–37 (QNSLVSEQQPS) are compositionally biased toward polar residues. A compositionally biased stretch (basic residues) spans 64–74 (RSLRLPKKRRD). Ser65 bears the Phosphoserine; by PKC mark. The PID domain occupies 102-255 (RTGTCCFNVK…STSSTPPKDI (154 aa)). 3 stretches are compositionally biased toward polar residues: residues 236–251 (AQVN…SSTP), 261–278 (EDNT…NSRS), and 354–364 (SLRTVSNNPTE). Low complexity predominate over residues 493 to 511 (MSMSPTSPSSDPPSTSSYS). Residues 516–528 (SGPPPAHAPPPLP) are compositionally biased toward pro residues. Polar residues predominate over residues 532-565 (AVSNGSPSIYQQQLQQANSTRNSPAGINWNSSPN).

As to quaternary structure, interacts with pkc-3. Expressed in cells comprising the intestine, pharyngeal cells, the anal sphincter and depressor muscles.

Its subcellular location is the cytoplasm. It localises to the cell cortex. The protein localises to the cytoskeleton. It is found in the membrane. Functionally, involved in the tethering and targeting of pkc-3 to modulate the intracellular distribution of the kinase. The complex formed with pkc-3 complexes are likely to be involved in assembly, maintenance, and/or regulation of protein complexes that execute asymmetric and/or polarized cell functions. The polypeptide is Numb-related protein 1 (Caenorhabditis elegans).